The chain runs to 270 residues: MALANNLTAILNLLALLCSIPITASGIWLASKPDNECVNLLRWPVVVLGVLILVVSATGFIGAYKYKETLLAVYLCCMAILIGLLLVVLIFAFVVTRPDGSYRVPGRGYKEYRLEGFSNWLKENVVDSKNWGRLRACLADTNVCPKLNQEFITADQFFSSSKITPLQSGCCKPPTACGYNFVNPTLWLNPTNMAADADCYLWSNDQSQLCYNCNSCKAGLLGNLRKEWRKANLILIITVVVLIWVYVIACSAFRNAQTEDLFRKYKQGWV.

The Cytoplasmic portion of the chain corresponds to 1-8 (MALANNLT). The helical transmembrane segment at 9-29 (AILNLLALLCSIPITASGIWL) threads the bilayer. The Extracellular portion of the chain corresponds to 30–42 (ASKPDNECVNLLR). A helical membrane pass occupies residues 43–63 (WPVVVLGVLILVVSATGFIGA). The Cytoplasmic segment spans residues 64-74 (YKYKETLLAVY). Residues 75–95 (LCCMAILIGLLLVVLIFAFVV) form a helical membrane-spanning segment. Residues 96-232 (TRPDGSYRVP…NLRKEWRKAN (137 aa)) lie on the Extracellular side of the membrane. Residues 233–253 (LILIITVVVLIWVYVIACSAF) traverse the membrane as a helical segment. The Cytoplasmic segment spans residues 254–270 (RNAQTEDLFRKYKQGWV).

This sequence belongs to the tetraspanin (TM4SF) family.

It is found in the membrane. May be involved in the regulation of cell differentiation. This Arabidopsis thaliana (Mouse-ear cress) protein is Tetraspanin-2 (TET2).